Here is a 269-residue protein sequence, read N- to C-terminus: Adenosylcobinamide-GDP ribazoletransferase (269 aa).

5 consecutive transmembrane segments (helical) span residues 8–28, 41–61, 70–90, 114–136, and 196–216; these read QFNL…PTAI, YFPL…CFML, VCLL…DGLA, IGTY…LSSL, and VPAV…SACV.

The protein belongs to the CobS family. Mg(2+) is required as a cofactor.

It is found in the cell inner membrane. The enzyme catalyses alpha-ribazole + adenosylcob(III)inamide-GDP = adenosylcob(III)alamin + GMP + H(+). The catalysed reaction is alpha-ribazole 5'-phosphate + adenosylcob(III)inamide-GDP = adenosylcob(III)alamin 5'-phosphate + GMP + H(+). It functions in the pathway cofactor biosynthesis; adenosylcobalamin biosynthesis; adenosylcobalamin from cob(II)yrinate a,c-diamide: step 7/7. Joins adenosylcobinamide-GDP and alpha-ribazole to generate adenosylcobalamin (Ado-cobalamin). Also synthesizes adenosylcobalamin 5'-phosphate from adenosylcobinamide-GDP and alpha-ribazole 5'-phosphate. This chain is Adenosylcobinamide-GDP ribazoletransferase, found in Pseudoalteromonas atlantica (strain T6c / ATCC BAA-1087).